Consider the following 211-residue polypeptide: Large ribosomal subunit protein bL25 (211 aa).

It belongs to the bacterial ribosomal protein bL25 family. CTC subfamily. Part of the 50S ribosomal subunit; part of the 5S rRNA/L5/L18/L25 subcomplex. Contacts the 5S rRNA. Binds to the 5S rRNA independently of L5 and L18.

Its function is as follows. This is one of the proteins that binds to the 5S RNA in the ribosome where it forms part of the central protuberance. This is Large ribosomal subunit protein bL25 from Xanthomonas axonopodis pv. citri (strain 306).